The chain runs to 103 residues: Acylphosphatase-2 (103 aa).

Position 2 is an N-acetylserine (S2). Residues S13–Y103 form the Acylphosphatase-like domain. Active-site residues include R28 and N46.

It belongs to the acylphosphatase family.

It catalyses the reaction an acyl phosphate + H2O = a carboxylate + phosphate + H(+). Functionally, its physiological role is not yet clear. This Anas platyrhynchos (Mallard) protein is Acylphosphatase-2 (ACYP2).